The following is a 501-amino-acid chain: MRIVWKLFGFSRRLLQVEWCHPSESILLFTLVPRLRKAPSVFLLGQRQGLSTMPEIEASVRDSELFSPPSDVRGMRELDRTAFKKTVSIPVLKARKEVVNRLMRALRRVALQRPGIKRVIEDPKDEDSRLIMLDPYRMLTADSFDKAELGVLKELDVSPQLSQYNLELTYENFKSEEILKAVLPEGQDVTSGFSRVGHIAHLNLRDHQLPFKHLIGQVMVDKNPGITSAVNKTSNIDNTYRNFQMEVLCGEENMLTKVRENNYTYEFDFSKVYWNPRLSTEHGRITELLNPGDVLFDVFAGVGPFAIPAARKNCTVFANDLNPESHKWLLHNCKLNKVDQKVKVFNMDGKDFIQGPVREELMLRLGLSAEAKPSVHIVMNLPAKAIEFLSVFRSLLDGQPCSTELLPTVHCYCFSKDSDPAKDVRQQAEAVLGVSLETSSSVHLVRNVAPNKEMLCITFQIPTATLYRNQSLSLQNDQEPPLKRQKTGDPFSGEPQIASDS.

S-adenosyl-L-methionine contacts are provided by residues H282, D320–L321, D348–G349, and N380. Residues L474–S501 are disordered.

This sequence belongs to the class I-like SAM-binding methyltransferase superfamily. TRM5/TYW2 family. In terms of assembly, monomer.

Its subcellular location is the mitochondrion matrix. The protein localises to the nucleus. It localises to the cytoplasm. The catalysed reaction is guanosine(37) in tRNA + S-adenosyl-L-methionine = N(1)-methylguanosine(37) in tRNA + S-adenosyl-L-homocysteine + H(+). In terms of biological role, involved in mitochondrial tRNA methylation. Specifically methylates the N1 position of guanosine-37 in various tRNAs. Methylation is not dependent on the nature of the nucleoside 5' of the target nucleoside. This is the first step in the biosynthesis of wybutosine (yW), a modified base adjacent to the anticodon of tRNAs and required for accurate decoding. The polypeptide is tRNA (guanine(37)-N(1))-methyltransferase (Trmt5) (Mus musculus (Mouse)).